Here is a 1620-residue protein sequence, read N- to C-terminus: MAFFTAASKADFQHQLQTALAQHLGDKALPQVTLFAEQFFSLISLDELTQRRLSDLVGCTLSAWRLLERFDRDQPEVRVYNPDYEKHGWQSTHTAVEVLHPDLPFLVDSVRMELNRRGYSIHTLQTNVLSVRRSAKGELKEILPKGSQGKDVSQESLMYLEIDRCAHAGELRALEKAILEVLGEVRVTVADFEPMKAKARELLTWLGKAKLKVPAEELKEVRSYLEWLLDNHFTFLGYEEFSVADEADGGRMVYDEKSFLGLTRLLRAGLSKDDLHIEDYAVAYLREPVLLSFAKAAHPSRVHRPAYPDYVSIRELDGKGRVIRECRFMGLFTSSVYNESVNDIPFIRGKVAEVMRRSGFDTKAHLGKELAQVLEVLPRDDLFQTPVDELFSTALAIVRIQERNKIRVFLRKDPYGRFCYCLAYVPRDVYSTETRLKIQQVLMERLQASDCEFWTFFSESVLARVQFILRVDPKSRIDIDPARLEEEVIQACRSWQDDYSSLVVENLGEAKGTNVLADFPKGFPAGYRERFAPHFAVVDLQHLLSLSEQRPLVMSFYQPLAQGEQQLHCKLYHADTPLALSDVLPILENLGLRVLGEFPYRLRHQNGREYWIHDFAFTYAEGLDVDIQQLNEILQDAFVHIVSGDAENDAFNRLVLTANLPWRDVALLRAYARYLKQIRLGFDLGYIASALNAHTDIARELVRLFKTRFYLARKLTAEDLEDKQQKLEQAILGALDEVQVLNEDRILRRYLDLIKATLRTNFYQPDGNGQNKSYFSFKFNPKAIPELPRPVPKYEIFVYSPRVEGVHLRGGKVARGGLRWSDREEDFRTEVLGLVKAQQVKNAVIVPVGAKGGFVPRRLPLGGSRDEIQAEAIACYRIFISGLLDITDNLKEGEVVPPANVVRHDEDDPYLVVAADKGTATFSDIANGIAAEYGFWLGDAFASGGSAGYDHKGMGITAKGAWVSVQRHFRERGIDVQKDNISVIGIGDMAGDVFGNGLLMSDKLQLVAAFNHMHIFIDPNPDAASSFVERQRLFNLPRSSWADYDAKLISAGGGIFLRSAKSIAITPEMKARFDIQADRLAPTELIHALLKAPVDLLWNGGIGTYVKSSKETHADVGDKANDGLRVDGRELRAKVVGEGGNLGMTQLARVEFGLHGGANNTDFIDNAGGVDCSDHEVNIKILLNEVVQAGDMTEKQRNALLVKMTDAVGALVLGNNYKQTQALSLAQRRARERIAEYKRLMGDLEARGKLDRALEFLPSDEELAERISAGQGLTRAELSVLISYSKIDLKESLLKSLVPDDDYLTRDMETAFPALLAEKFGDAMRRHRLKREIVSTQIANDLVNHMGITFVQRLKESTGMSAANVAGAYVIVRDVFHLPHWFRQIENLDYQVPADIQLTLMDELMRLGRRATRWFLRSRRNELDAARDVAHFGPRIAALGLKLNELLEGPTRELWQARYQTYVDAGVPELLARMVAGTSHLYTLLPIIEASDVTGQDTAEVAKAYFAVGSALDLTWYLQQITNLPVENNWQALAREAFRDDLDWQQRAITVSVLQMQDGPKEVEARVGLWLEQHLPLVERWRAMLVELRAASGTDYAMYAVANRELMDLAQSSQHGVCIP.

Residue K851 is part of the active site.

This sequence belongs to the Glu/Leu/Phe/Val dehydrogenases family. Homotetramer. In terms of processing, contains disulfide bonds (interchain).

The enzyme catalyses L-glutamate + NAD(+) + H2O = 2-oxoglutarate + NH4(+) + NADH + H(+). With respect to regulation, activity subject to allosteric control by arginine and citrate, which function as positive and negative effectors, respectively. In terms of biological role, involved in arginine catabolism by converting L-glutamate, into 2-oxoglutarate, which is then channeled into the tricarboxylic acid cycle. Can also utilize other amino acids of the glutamate family. The sequence is that of NAD-specific glutamate dehydrogenase (gdhB) from Pseudomonas aeruginosa (strain ATCC 15692 / DSM 22644 / CIP 104116 / JCM 14847 / LMG 12228 / 1C / PRS 101 / PAO1).